A 129-amino-acid chain; its full sequence is Histone H2B.2 (129 aa).

Positions 1–19 are enriched in basic and acidic residues; that stretch reads MAPKAEKKPASKAPAEKKP. The segment at 1 to 37 is disordered; that stretch reads MAPKAEKKPASKAPAEKKPAAKKTASSDSKKRTKTRK. An N6-acetyllysine; alternate mark is found at Lys-7 and Lys-8. Glycyl lysine isopeptide (Lys-Gly) (interchain with G-Cter in SUMO); alternate cross-links involve residues Lys-7 and Lys-8. At Ser-11 the chain carries Phosphoserine. Position 12 is an N6-acetyllysine (Lys-12). Residue Lys-17 is modified to N6-acetyllysine; alternate. A Glycyl lysine isopeptide (Lys-Gly) (interchain with G-Cter in SUMO); alternate cross-link involves residue Lys-17. A Glycyl lysine isopeptide (Lys-Gly) (interchain with G-Cter in SUMO) cross-link involves residue Lys-18. Lys-123 is covalently cross-linked (Glycyl lysine isopeptide (Lys-Gly) (interchain with G-Cter in ubiquitin)).

It belongs to the histone H2B family. As to quaternary structure, the nucleosome is a histone octamer containing two molecules each of H2A, H2B, H3 and H4 assembled in one H3-H4 heterotetramer and two H2A-H2B heterodimers. The octamer wraps approximately 147 bp of DNA. In terms of processing, monoubiquitinated by the UBC2-BRE1 complex to form H2BK123ub1. H2BK123ub1 gives a specific tag for epigenetic transcriptional activation and is also prerequisite for H3K4me and H3K79me formation. H2BK123ub1 also modulates the formation of double-strand breaks during meiosis and is a prerequisite for DNA-damage checkpoint activation. Post-translationally, phosphorylated by STE20 to form H2BS10ph during progression through meiotic prophase. May be correlated with chromosome condensation. Acetylated by GCN5 to form H2BK11ac and H2BK16ac. H2BK16ac can also be formed by ESA1. Acetylation of N-terminal lysines and particularly formation of H2BK11acK16ac has a positive effect on transcription. In terms of processing, sumoylation to form H2BK6su or H2BK7su, and probably also H2BK16su or H2BK17su, occurs preferentially near the telomeres and represses gene transcription.

It is found in the nucleus. It localises to the chromosome. Core component of nucleosome. Nucleosomes wrap and compact DNA into chromatin, limiting DNA accessibility to the cellular machineries which require DNA as a template. Histones thereby play a central role in transcription regulation, DNA repair, DNA replication and chromosomal stability. DNA accessibility is regulated via a complex set of post-translational modifications of histones, also called histone code, and nucleosome remodeling. The polypeptide is Histone H2B.2 (HTB2) (Meyerozyma guilliermondii (strain ATCC 6260 / CBS 566 / DSM 6381 / JCM 1539 / NBRC 10279 / NRRL Y-324) (Yeast)).